The primary structure comprises 760 residues: Molybdenum cofactor sulfurase 2 (760 aa).

Lys223 is subject to N6-(pyridoxal phosphate)lysine. The active site involves Cys389. The region spanning 608–758 (QSDDEARTLR…LHCGSPLQVV (151 aa)) is the MOSC domain.

It belongs to the class-V pyridoxal-phosphate-dependent aminotransferase family. MOCOS subfamily. It depends on pyridoxal 5'-phosphate as a cofactor.

It carries out the reaction Mo-molybdopterin + L-cysteine + AH2 = thio-Mo-molybdopterin + L-alanine + A + H2O. In terms of biological role, sulfurates the molybdenum cofactor. Sulfation of molybdenum is essential for xanthine dehydrogenase (XDH) and aldehyde oxidase (ADO) enzymes in which molybdenum cofactor is liganded by 1 oxygen and 1 sulfur atom in active form. The sequence is that of Molybdenum cofactor sulfurase 2 from Culex quinquefasciatus (Southern house mosquito).